The chain runs to 356 residues: Cytochrome c oxidase subunit 2 (356 aa).

An N-terminal signal peptide occupies residues 1-20 (MVKHWRLILLLALVPLLLSG). C21 carries the N-palmitoyl cysteine lipid modification. C21 carries the S-diacylglycerol cysteine lipid modification. Residues 21 to 47 (CGKPFLSTLKPAGEVADKQYDLTVLST) are Extracellular-facing. The tract at residues 21 to 257 (CGKPFLSTLK…KNYKSTAESD (237 aa)) is cytochrome c oxidase subunit II. Residues 48–66 (LIMVVVVAVVSVIFFYVIV) form a helical membrane-spanning segment. The Cytoplasmic segment spans residues 67–87 (RFRRSRVGENTIPKQVEGNKF). The helical transmembrane segment at 88–106 (LEITWTVIPILLLIILVIP) threads the bilayer. The Extracellular segment spans residues 107 to 356 (VVLYTLELAD…YLKGLKAESK (250 aa)). Residues H176, C217, C221, and H225 each coordinate Cu cation. Residues 258 to 356 (LAKQGEELFK…YLKGLKAESK (99 aa)) form the Cytochrome c domain. 4 residues coordinate heme c: C271, C274, H275, and M329.

This sequence belongs to the cytochrome c oxidase subunit 2 family. The cofactor is Cu cation. It depends on heme c as a cofactor.

It localises to the cell membrane. The catalysed reaction is 4 Fe(II)-[cytochrome c] + O2 + 8 H(+)(in) = 4 Fe(III)-[cytochrome c] + 2 H2O + 4 H(+)(out). Its function is as follows. Subunits I and II form the functional core of the enzyme complex. Electrons originating in cytochrome c are transferred via heme a and Cu(A) to the binuclear center formed by heme a3 and Cu(B). This Bacillus subtilis (strain 168) protein is Cytochrome c oxidase subunit 2 (ctaC).